The following is a 247-amino-acid chain: tRNA pseudouridine synthase A (247 aa).

Catalysis depends on D53, which acts as the Nucleophile. Y111 serves as a coordination point for substrate.

This sequence belongs to the tRNA pseudouridine synthase TruA family. As to quaternary structure, homodimer.

The catalysed reaction is uridine(38/39/40) in tRNA = pseudouridine(38/39/40) in tRNA. Formation of pseudouridine at positions 38, 39 and 40 in the anticodon stem and loop of transfer RNAs. This chain is tRNA pseudouridine synthase A, found in Bacillus licheniformis (strain ATCC 14580 / DSM 13 / JCM 2505 / CCUG 7422 / NBRC 12200 / NCIMB 9375 / NCTC 10341 / NRRL NRS-1264 / Gibson 46).